Reading from the N-terminus, the 65-residue chain is Large ribosomal subunit protein uL30 (65 aa).

It belongs to the universal ribosomal protein uL30 family. As to quaternary structure, part of the 50S ribosomal subunit.

This is Large ribosomal subunit protein uL30 from Mycobacterium bovis (strain ATCC BAA-935 / AF2122/97).